A 193-amino-acid chain; its full sequence is dCTP deaminase, dUMP-forming (193 aa).

DCTP contacts are provided by residues 101–106 (KSSLGR), aspartate 119, 127–129 (TLE), glutamine 148, tyrosine 162, and glutamine 174. Glutamate 129 (proton donor/acceptor) is an active-site residue. The tract at residues 161-184 (PYGSETTGSHYQGQRGPTPSRSYQ) is disordered.

It belongs to the dCTP deaminase family. Homotrimer.

It carries out the reaction dCTP + 2 H2O = dUMP + NH4(+) + diphosphate. Its pathway is pyrimidine metabolism; dUMP biosynthesis; dUMP from dCTP: step 1/1. In terms of biological role, bifunctional enzyme that catalyzes both the deamination of dCTP to dUTP and the hydrolysis of dUTP to dUMP without releasing the toxic dUTP intermediate. In Bifidobacterium animalis subsp. lactis (strain AD011), this protein is dCTP deaminase, dUMP-forming.